The following is a 167-amino-acid chain: NADH-ubiquinone oxidoreductase chain 6 (167 aa).

Transmembrane regions (helical) follow at residues 5-25 (IIML…TIYL), 34-54 (MLLI…FTMC), 60-80 (LILM…SYFI), and 138-158 (FFIM…ITYI).

Belongs to the complex I subunit 6 family.

The protein resides in the mitochondrion membrane. It carries out the reaction a ubiquinone + NADH + 5 H(+)(in) = a ubiquinol + NAD(+) + 4 H(+)(out). Functionally, core subunit of the mitochondrial membrane respiratory chain NADH dehydrogenase (Complex I) that is believed to belong to the minimal assembly required for catalysis. Complex I functions in the transfer of electrons from NADH to the respiratory chain. The immediate electron acceptor for the enzyme is believed to be ubiquinone. The sequence is that of NADH-ubiquinone oxidoreductase chain 6 (ND6) from Apis mellifera ligustica (Common honeybee).